Here is a 216-residue protein sequence, read N- to C-terminus: Glutathione S-transferase 1, isoform B (216 aa).

The GST N-terminal domain maps to 1–80 (MDFYYLPGSA…YLVEKYGKPC (80 aa)). Residues Ser9, 50–52 (HCV), and 64–66 (ESR) contribute to the glutathione site. The 122-residue stretch at 89–210 (DPQKRAIVNQ…RSWAEAARPF (122 aa)) folds into the GST C-terminal domain.

It belongs to the GST superfamily. Theta family. In terms of assembly, homodimer.

It catalyses the reaction RX + glutathione = an S-substituted glutathione + a halide anion + H(+). Conjugation of reduced glutathione to a wide number of exogenous and endogenous hydrophobic electrophiles. The chain is Glutathione S-transferase 1, isoform B from Anopheles gambiae (African malaria mosquito).